A 336-amino-acid chain; its full sequence is MKLSDFDYHLPKELIAKYPAQPRDSCRLMVLNRKDKTIEHRIFRDVIDYLKPGDTLVLNNTKVIPARLIGKKEKTNANIEVFLLRPIEDNIWETLIKNVRRLKKNQKIIISDDFYVEFLSKDDEKAIVKIHSKDIKSDLEKYGHVPLPPYIEREDEEKDKDYYQTVFADKEGSVASPTAGLHFTKELLEKIKEKGVNIAYITLHVGLGTFKPVKTEDITKHKMHEEYFTIPKETLEMIKKTKENKKSLVAVGTTVVRALETYGKFGKTEGFTDIFIYPPYEFKIVDKLITNFHLPKSTLLMLVSAFADRDFILRAYNGAVKEKYRFFSYGDAMLIV.

This sequence belongs to the QueA family. As to quaternary structure, monomer.

It is found in the cytoplasm. It carries out the reaction 7-aminomethyl-7-carbaguanosine(34) in tRNA + S-adenosyl-L-methionine = epoxyqueuosine(34) in tRNA + adenine + L-methionine + 2 H(+). It participates in tRNA modification; tRNA-queuosine biosynthesis. Transfers and isomerizes the ribose moiety from AdoMet to the 7-aminomethyl group of 7-deazaguanine (preQ1-tRNA) to give epoxyqueuosine (oQ-tRNA). This is S-adenosylmethionine:tRNA ribosyltransferase-isomerase from Sulfurihydrogenibium sp. (strain YO3AOP1).